A 295-amino-acid chain; its full sequence is Protoheme IX farnesyltransferase (295 aa).

A run of 9 helical transmembrane segments spans residues 8–28 (ITKPGIIFGNLISVAGGFFLA), 35–55 (GGLFLATVIGIALVIASGCVF), 83–103 (GVTLAYGGVLGVAGFSVLWFG), 107–127 (LATAFALLGFVVYVGLYSLYL), 132–152 (IYGTLVGSLSGAAPPVVGYCA), 162–182 (LTLLLIFCLWQMPHSYAIAIF), 208–228 (IFWYILAFLGATLMLTLGGYA), 229–249 (GYGYFAVAAAMGLYWLVMALR), and 263–283 (VFIFSIFTITALSIMMSIDFQ).

This sequence belongs to the UbiA prenyltransferase family. Protoheme IX farnesyltransferase subfamily.

It is found in the cell inner membrane. The enzyme catalyses heme b + (2E,6E)-farnesyl diphosphate + H2O = Fe(II)-heme o + diphosphate. It participates in porphyrin-containing compound metabolism; heme O biosynthesis; heme O from protoheme: step 1/1. Its function is as follows. Converts heme B (protoheme IX) to heme O by substitution of the vinyl group on carbon 2 of heme B porphyrin ring with a hydroxyethyl farnesyl side group. In Chromohalobacter salexigens (strain ATCC BAA-138 / DSM 3043 / CIP 106854 / NCIMB 13768 / 1H11), this protein is Protoheme IX farnesyltransferase.